The following is a 334-amino-acid chain: N-acetylmuramoyl-L-alanine amidase sle1 (334 aa).

The first 25 residues, 1 to 25 (MQKKVIAAIIGTSAISAVAATQANA), serve as a signal peptide directing secretion. One can recognise a LysM 1 domain in the interval 27–70 (TTHTVKPGESVWAISNKYGISIAKLKSLNNLTSNLIFPNQVLKV). Over residues 71–86 (SGSSNSTSNSSRPSTN) the composition is skewed to low complexity. Positions 71 to 90 (SGSSNSTSNSSRPSTNSGGG) are disordered. LysM domains are found at residues 91–134 (SYYT…KLKV) and 158–201 (SYYT…KLKV). In terms of domain architecture, Peptidase C51 spans 210–334 (GSATTTNRGY…YQVNNYRYIH (125 aa)).

It localises to the secreted. The protein localises to the cell surface. The enzyme catalyses Hydrolyzes the link between N-acetylmuramoyl residues and L-amino acid residues in certain cell-wall glycopeptides.. In terms of biological role, peptidoglycan hydrolase involved in the splitting of the septum during cell division. The chain is N-acetylmuramoyl-L-alanine amidase sle1 (sle1) from Staphylococcus aureus (strain USA300).